A 477-amino-acid polypeptide reads, in one-letter code: ETS translocation variant 1 (477 aa).

S94 bears the Phosphoserine mark. A disordered region spans residues 128–179 (PQVGMRPSNPPTPSSTPVSPLHHASPNTAHTPKPDRAFPAHLPPSQSIPDST). S191 and S216 each carry phosphoserine; by RPS6KA1 and RPS6KA5. A Glycyl lysine isopeptide (Lys-Gly) (interchain with G-Cter in SUMO2) cross-link involves residue K317. Residues 335–415 (LQLWQFLVAL…AGERYVYKFV (81 aa)) constitute a DNA-binding region (ETS).

This sequence belongs to the ETS family. In terms of processing, sumoylated. Phosphorylated at Ser-191 and Ser-216 by RPS6KA1 and RPS6KA5; phosphorylation activates transcriptional activity. In terms of tissue distribution, abundant in kidney. Moderate levels seen in the heart, brain, lung, embryo and lower levels seen in spleen, intestine, testis and thymus.

It localises to the nucleus. In terms of biological role, transcriptional activator that binds to DNA sequences containing the consensus pentanucleotide 5'-CGGA[AT]-3'. Required for olfactory dopaminergic neuron differentiation; may directly activate expression of tyrosine hydroxylase (TH). The polypeptide is ETS translocation variant 1 (Mus musculus (Mouse)).